A 297-amino-acid chain; its full sequence is Cbb3-type cytochrome c oxidase subunit CcoP (297 aa).

Residues 1–35 lie on the Cytoplasmic side of the membrane; it reads MSKKPTTKKEVQTTGHSWDGIEELNTPLPRWWLWT. A helical transmembrane segment spans residues 36-56; the sequence is FYATIVWGVAYSIAMPAWPIF. The Periplasmic portion of the chain corresponds to 57-297; sequence ASGATPGILG…SYVHSLGGGQ (241 aa). Cytochrome c domains follow at residues 108 to 199 and 206 to 294; these read YTRN…LKIS and ARAT…HSLG. Heme c contacts are provided by Cys-121, Cys-124, His-125, Met-174, Cys-219, Cys-222, His-223, and Met-264.

Belongs to the CcoP / FixP family. As to quaternary structure, component of the cbb3-type cytochrome c oxidase at least composed of CcoN, CcoO, CcoQ and CcoP. Interacts with CcoH (via transmembrane domain). Requires heme c as cofactor.

Its subcellular location is the cell inner membrane. Its pathway is energy metabolism; oxidative phosphorylation. In terms of biological role, C-type cytochrome. Part of the cbb3-type cytochrome c oxidase complex. CcoP subunit is required for transferring electrons from donor cytochrome c via its heme groups to CcoO subunit. From there, electrons are shuttled to the catalytic binuclear center of CcoN subunit where oxygen reduction takes place. The complex also functions as a proton pump. This Rhodobacter capsulatus (strain ATCC BAA-309 / NBRC 16581 / SB1003) protein is Cbb3-type cytochrome c oxidase subunit CcoP.